A 260-amino-acid polypeptide reads, in one-letter code: Mantle protein (260 aa).

Residues Met1–Ser16 form the signal peptide.

Prismatic layer of shell (at protein level). Expressed primarily in the mantle with highest level in the mantle edge and lower level in the mantle pallium.

The protein resides in the secreted. The polypeptide is Mantle protein (Pinctada maxima (Silver-lipped pearl oyster)).